A 1405-amino-acid polypeptide reads, in one-letter code: DNA-directed RNA polymerase subunit beta' (1405 aa).

Residues cysteine 70, cysteine 72, cysteine 85, and cysteine 88 each contribute to the Zn(2+) site. Aspartate 460, aspartate 462, and aspartate 464 together coordinate Mg(2+). The Zn(2+) site is built by cysteine 814, cysteine 888, cysteine 895, and cysteine 898.

It belongs to the RNA polymerase beta' chain family. As to quaternary structure, the RNAP catalytic core consists of 2 alpha, 1 beta, 1 beta' and 1 omega subunit. When a sigma factor is associated with the core the holoenzyme is formed, which can initiate transcription. Requires Mg(2+) as cofactor. Zn(2+) serves as cofactor.

The catalysed reaction is RNA(n) + a ribonucleoside 5'-triphosphate = RNA(n+1) + diphosphate. In terms of biological role, DNA-dependent RNA polymerase catalyzes the transcription of DNA into RNA using the four ribonucleoside triphosphates as substrates. This is DNA-directed RNA polymerase subunit beta' from Shewanella putrefaciens (strain CN-32 / ATCC BAA-453).